A 644-amino-acid chain; its full sequence is Exoribonuclease 2 (644 aa).

Residues 189–516 (RQDLTALNFV…NHRLLKAAIK (328 aa)) enclose the RNB domain. One can recognise an S1 motif domain in the interval 561 to 643 (DTRFAAEIID…ETRSIIARPV (83 aa)).

The protein belongs to the RNR ribonuclease family. RNase II subfamily.

The protein resides in the cytoplasm. It catalyses the reaction Exonucleolytic cleavage in the 3'- to 5'-direction to yield nucleoside 5'-phosphates.. Its function is as follows. Involved in mRNA degradation. Hydrolyzes single-stranded polyribonucleotides processively in the 3' to 5' direction. In Escherichia fergusonii (strain ATCC 35469 / DSM 13698 / CCUG 18766 / IAM 14443 / JCM 21226 / LMG 7866 / NBRC 102419 / NCTC 12128 / CDC 0568-73), this protein is Exoribonuclease 2.